The chain runs to 712 residues: Ribosomal RNA large subunit methyltransferase K/L (712 aa).

One can recognise a THUMP domain in the interval 42–153; it reads QALRIVMWSR…KGRASLSIDL (112 aa).

The protein belongs to the methyltransferase superfamily. RlmKL family.

It is found in the cytoplasm. The catalysed reaction is guanosine(2445) in 23S rRNA + S-adenosyl-L-methionine = N(2)-methylguanosine(2445) in 23S rRNA + S-adenosyl-L-homocysteine + H(+). It carries out the reaction guanosine(2069) in 23S rRNA + S-adenosyl-L-methionine = N(2)-methylguanosine(2069) in 23S rRNA + S-adenosyl-L-homocysteine + H(+). Its function is as follows. Specifically methylates the guanine in position 2445 (m2G2445) and the guanine in position 2069 (m7G2069) of 23S rRNA. This Stenotrophomonas maltophilia (strain R551-3) protein is Ribosomal RNA large subunit methyltransferase K/L.